We begin with the raw amino-acid sequence, 67 residues long: Andropin (67 aa).

Residues 1–19 (MKYFLVLVVLTLILAISVG) form the signal peptide.

Belongs to the andropin family. In terms of tissue distribution, ejaculatory duct of adult males.

The protein resides in the secreted. Functionally, male-specific peptide with moderate activity against Gram-positive bacteria. The polypeptide is Andropin (Anp) (Drosophila orena (Fruit fly)).